The chain runs to 338 residues: MASDAEWVLESVLGFVSGPVWTVPVLEFMEHKCSVFDDDEENKLSYTDIHNEYKELVETLLTQHLNEVGISEEQFQEACAAPLAHSATLKNILQPVLAVEDFKIFKAMMVQKNIELQLQAIRIIQERNGVLPDCLQHGSDIISDLEQEEMKLVSEALRLSKEEYEREQLRRSAKELNCTFGEHSKTKQSNGSERTPSNTELPDQSHEIEQQPVKMQESPYEEASMKLKEMSNTEAAEAWLEQARKEAGILSSVTNLSQAEKEQLQKRAEYLRRRREELLAKKQESKKMAHNSEVHEEKATCSKQEMTEEEKKSLQRRKQLAEKLKEEVILCEKSGTAS.

Residues 142–179 (ISDLEQEEMKLVSEALRLSKEEYEREQLRRSAKELNCT) are a coiled coil. Disordered stretches follow at residues 175-220 (ELNC…ESPY) and 281-314 (KKQE…KKSL). Residues 187-202 (KQSNGSERTPSNTELP) are compositionally biased toward polar residues. A coiled-coil region spans residues 255–330 (NLSQAEKEQL…AEKLKEEVIL (76 aa)).

This sequence belongs to the CFAP36 family.

Its subcellular location is the nucleus. It localises to the cytoplasm. The protein localises to the cell projection. It is found in the cilium. The protein resides in the flagellum. The sequence is that of Cilia- and flagella-associated protein 36 from Xenopus laevis (African clawed frog).